Here is a 494-residue protein sequence, read N- to C-terminus: Voltage-gated potassium channel regulatory subunit KCNF1 (494 aa).

At 1–183 (MDGSGERSLP…KPESSCPARV (183 aa)) the chain is on the cytoplasmic side. Residues 184–204 (VAVLSFLLILVSSVVMCMGTI) form a helical membrane-spanning segment. Residues 224-244 (NVETACIGWFTLEYLLRLFSS) traverse the membrane as a helical segment. The Cytoplasmic portion of the chain corresponds to 245–249 (PNKLH). A helical transmembrane segment spans residues 250–270 (FALSFMNIVDVLAILPFYVSL). The helical; Voltage-sensor transmembrane segment at 290 to 310 (QALRIMRIARIFKLARHSSGL) threads the bilayer. At 311–324 (QTLTYALKRSFKEL) the chain is on the cytoplasmic side. The helical transmembrane segment at 325 to 345 (GLLLMYLAVGIFVFSALGYTM) threads the bilayer. Residues 358-378 (PQSFWWAIITMTTVGYGDIYP) constitute an intramembrane region (pore-forming). A Selectivity filter motif is present at residues 370–375 (TVGYGD). Residues 386–406 (NAAISFLCGVIAIALPIHPII) form a helical membrane-spanning segment. At 407 to 494 (NNFVRYYNKQ…HHRTRLQSCK (88 aa)) the chain is on the cytoplasmic side. The interval 433–469 (NSSSGGEGKTGGSRSDLDNLPPEPAGKEAPSCSSRLK) is disordered.

This sequence belongs to the potassium channel family. F (TC 1.A.1.2) subfamily. Kv5.1/KCNF1 sub-subfamily. In terms of assembly, heterotetramer with KCNB1 or KCNB2. As to expression, detected in heart, brain, liver, skeletal muscle, kidney and pancreas.

The protein localises to the cell membrane. Regulatory alpha-subunit of the voltage-gated potassium (Kv) channel which, when coassembled with KCNB1 or KCNB2, can modulate their expression and their gating kinetics by acting on deactivation upon repolarization and inactivation during maintained depolarization. Accelerates inactivation but has relatively little effect on deactivation. Coexpression with KCNB1 or KCNB2 markedly slows inactivation. Each modulatory subunit has its own specific properties of regulation, and can lead to extensive inhibitions, to large changes in kinetics, and/or to large shifts in the voltage dependencies of the inactivation process. The gating kinetics depends on the nature and stoichiometry of the associated regulatory sunbunit. Fails to produce a potassium current when expressed alone. This chain is Voltage-gated potassium channel regulatory subunit KCNF1, found in Homo sapiens (Human).